Reading from the N-terminus, the 143-residue chain is Large ribosomal subunit protein bL17 (143 aa).

This sequence belongs to the bacterial ribosomal protein bL17 family. As to quaternary structure, part of the 50S ribosomal subunit. Contacts protein L32.

The chain is Large ribosomal subunit protein bL17 from Chelativorans sp. (strain BNC1).